We begin with the raw amino-acid sequence, 461 residues long: Lysosomal dipeptide transporter MFSD1 (461 aa).

Over residues 1 to 13 (MADREEHQGLLDG) the composition is skewed to basic and acidic residues. The interval 1–22 (MADREEHQGLLDGDRDEDEGDK) is disordered. Residues 10-11 (LL) carry the Dileucine internalization motif motif. Transmembrane regions (helical) follow at residues 37-57 (LLHRILVLIFMCFLGFGSYFC), 81-101 (QLYAWYSWPNVVLCFLGGFLL), 111-131 (TVIFSLFVLVGQIIFAAGALA), 134-154 (FWLMNVGRFVFGIGGESLAVA), 264-284 (LWLIFIICVAYYVAIFPFIGL), 302-322 (AINSVVYIISAPASPLLGFLV), 331-351 (WVMLAVITTLLSHMMLAFTFW), 359-379 (LLGVSYSLLACALWPMVAFVV), 390-410 (FMQSIQNLGLAVMSIAAGSIL), and 416-436 (LFLEVFFIACLCMALLAVVLL).

Belongs to the major facilitator superfamily. Homodimer. Interacts with lysosomal protein GLMP (via lumenal domain); the interaction starts while both proteins are still in the endoplasmic reticulum and is required for stabilization of MFSD1 in lysosomes but has no direct effect on its targeting to lysosomes or transporter activity.

The protein localises to the lysosome membrane. The catalysed reaction is L-alpha-aminoacyl-L-arginine(out) = L-alpha-aminoacyl-L-arginine(in). The enzyme catalyses L-arginyl-L-alpha-amino acid(out) = L-arginyl-L-alpha-amino acid(in). It catalyses the reaction L-arginyl-glycine(out) = L-arginyl-glycine(in). It carries out the reaction L-alpha-aminoacyl-L-lysine(out) = L-alpha-aminoacyl-L-lysine(in). The catalysed reaction is L-aspartyl-L-lysine(out) = L-aspartyl-L-lysine(in). The enzyme catalyses L-alanyl-L-lysine(out) = L-alanyl-L-lysine(in). It catalyses the reaction L-lysyl-L-alpha-amino acid(out) = L-lysyl-L-alpha-amino acid(in). It carries out the reaction L-lysyl-L-alanine(out) = L-lysyl-L-alanine(in). The catalysed reaction is L-lysyl-L-lysine(out) = L-lysyl-L-lysine(in). The enzyme catalyses L-lysyl-glycine(out) = L-lysyl-glycine(in). It catalyses the reaction L-alpha-aminoacyl-L-histidine(out) = L-alpha-aminoacyl-L-histidine(in). It carries out the reaction L-histidyl-L-alpha-amino acid(out) = L-histidyl-L-alpha-amino acid(in). The catalysed reaction is L-histidyl-glycine(out) = L-histidyl-glycine(in). Lysosomal dipeptide uniporter that selectively exports lysine, arginine or histidine-containing dipeptides with a net positive charge from the lysosome lumen into the cytosol. Could play a role in a specific type of protein O-glycosylation indirectly regulating macrophages migration and tissue invasion. Also essential for liver homeostasis. In Danio rerio (Zebrafish), this protein is Lysosomal dipeptide transporter MFSD1 (mfsd1).